Reading from the N-terminus, the 412-residue chain is Lipid droplet organization protein LDO45 (412 aa).

Topologically, residues methionine 1–asparagine 170 are cytoplasmic. A helical membrane pass occupies residues serine 171–glycine 191. Residues aspartate 192–lysine 247 are Lumenal-facing. Residues valine 248–threonine 268 traverse the membrane as a helical segment. Over alanine 269 to phenylalanine 271 the chain is Cytoplasmic. The helical transmembrane segment at phenylalanine 272–isoleucine 292 threads the bilayer. A topological domain (lumenal) is located at residue proline 293. Residues leucine 294–methionine 314 traverse the membrane as a helical segment. The Cytoplasmic portion of the chain corresponds to serine 315–serine 412. Residues glutamine 347 to proline 374 form a disordered region. Positions arginine 357–arginine 373 are enriched in polar residues.

Interacts specifically with the seipin complex FLD1-LDB16. Only a fraction appears to associate with the seipin core components, suggesting that it may be an ancillary subunit of the complex.

The protein localises to the endoplasmic reticulum membrane. It localises to the lipid droplet. Its function is as follows. Involved in lipid droplet (LD) organization. Modulates triglyceride (TAG) storage by reducing DGA1 LD localization. Promotes LD targeting of some proteins, including PDR16. The protein is Lipid droplet organization protein LDO45 of Saccharomyces cerevisiae (strain ATCC 204508 / S288c) (Baker's yeast).